Reading from the N-terminus, the 333-residue chain is D-fructose 1,6-bisphosphatase class 2/sedoheptulose 1,7-bisphosphatase (333 aa).

Residues aspartate 33, glutamate 57, aspartate 85, and glutamate 88 each contribute to the Mn(2+) site. Substrate contacts are provided by residues glutamate 88–threonine 90, tyrosine 119, arginine 164–arginine 166, and aspartate 186–aspartate 188. Mn(2+) is bound at residue glutamate 213.

It belongs to the FBPase class 2 family. As to quaternary structure, homotetramer. The cofactor is Mn(2+).

It catalyses the reaction beta-D-fructose 1,6-bisphosphate + H2O = beta-D-fructose 6-phosphate + phosphate. The enzyme catalyses D-sedoheptulose 1,7-bisphosphate + H2O = D-sedoheptulose 7-phosphate + phosphate. It functions in the pathway carbohydrate biosynthesis; Calvin cycle. In terms of biological role, catalyzes the hydrolysis of fructose 1,6-bisphosphate (Fru 1,6-P2) and sedoheptulose 1,7-bisphosphate (Sed 1,7-P2) to fructose 6-phosphate and sedoheptulose 7-phosphate, respectively. The sequence is that of D-fructose 1,6-bisphosphatase class 2/sedoheptulose 1,7-bisphosphatase from Prochlorococcus marinus (strain MIT 9301).